Consider the following 462-residue polypeptide: L-seryl-tRNA(Sec) selenium transferase (462 aa).

Lysine 294 is modified (N6-(pyridoxal phosphate)lysine).

Belongs to the SelA family. In terms of assembly, homodecamer; pentamer of dimers. Binds only one seryl-tRNA(Sec) per dimer. Pyridoxal 5'-phosphate is required as a cofactor.

The protein localises to the cytoplasm. It carries out the reaction L-seryl-tRNA(Sec) + selenophosphate + H(+) = L-selenocysteinyl-tRNA(Sec) + phosphate. The protein operates within aminoacyl-tRNA biosynthesis; selenocysteinyl-tRNA(Sec) biosynthesis; selenocysteinyl-tRNA(Sec) from L-seryl-tRNA(Sec) (bacterial route): step 1/1. In terms of biological role, converts seryl-tRNA(Sec) to selenocysteinyl-tRNA(Sec) required for selenoprotein biosynthesis. In Yersinia pestis bv. Antiqua (strain Antiqua), this protein is L-seryl-tRNA(Sec) selenium transferase.